The following is a 246-amino-acid chain: tRNA (guanine-N(1)-)-methyltransferase (246 aa).

Residues Gly-113 and 133-138 (IGDYVL) contribute to the S-adenosyl-L-methionine site.

This sequence belongs to the RNA methyltransferase TrmD family. Homodimer.

The protein resides in the cytoplasm. It catalyses the reaction guanosine(37) in tRNA + S-adenosyl-L-methionine = N(1)-methylguanosine(37) in tRNA + S-adenosyl-L-homocysteine + H(+). Specifically methylates guanosine-37 in various tRNAs. This chain is tRNA (guanine-N(1)-)-methyltransferase, found in Yersinia pseudotuberculosis serotype O:1b (strain IP 31758).